Consider the following 286-residue polypeptide: Nucleoid occlusion protein (286 aa).

Residues 147 to 166 (EALAQRLGKNQSTVANKLRL) constitute a DNA-binding region (H-T-H motif).

This sequence belongs to the ParB family.

It localises to the cytoplasm. The protein localises to the nucleoid. Effects nucleoid occlusion by binding relatively nonspecifically to DNA and preventing the assembly of the division machinery in the vicinity of the nucleoid, especially under conditions that disturb the cell cycle. It helps to coordinate cell division and chromosome segregation by preventing the formation of the Z ring through the nucleoid, which would cause chromosome breakage. The protein is Nucleoid occlusion protein of Oceanobacillus iheyensis (strain DSM 14371 / CIP 107618 / JCM 11309 / KCTC 3954 / HTE831).